The following is a 659-amino-acid chain: Cysteine-rich receptor-like protein kinase 18 (659 aa).

Residues 1–27 form the signal peptide; sequence MATKSCELVLCFFVFFVISFSAISVSA. 2 Gnk2-homologous domains span residues 28–131 and 137–250; these read QTCD…NRPF and MDPL…VYPF. Over 28-287 the chain is Extracellular; sequence QTCDNTTGTF…KNDSRISGGK (260 aa). 9 N-linked (GlcNAc...) asparagine glycosylation sites follow: Asn-32, Asn-57, Asn-152, Asn-162, Asn-179, Asn-180, Asn-197, Asn-275, and Asn-279. The helical transmembrane segment at 288 to 308 threads the bilayer; sequence IAAIVVVTVVTIILVVLGFVI. Residues 309–659 lie on the Cytoplasmic side of the membrane; sequence SNRRKQKQEM…EATITDVNPR (351 aa). Residues 339–611 form the Protein kinase domain; that stretch reads FSERNKLGKG…PTMSTIHQML (273 aa). ATP contacts are provided by residues 345-353 and Lys-367; that span reads LGKGGFGEV. A Phosphotyrosine modification is found at Tyr-412. Asp-464 acts as the Proton acceptor in catalysis. Ser-468 bears the Phosphoserine mark. Position 504 is a phosphothreonine (Thr-504). Tyr-512 bears the Phosphotyrosine mark.

Belongs to the protein kinase superfamily. Ser/Thr protein kinase family. CRK subfamily.

It is found in the membrane. It carries out the reaction L-seryl-[protein] + ATP = O-phospho-L-seryl-[protein] + ADP + H(+). The catalysed reaction is L-threonyl-[protein] + ATP = O-phospho-L-threonyl-[protein] + ADP + H(+). This chain is Cysteine-rich receptor-like protein kinase 18 (CRK18), found in Arabidopsis thaliana (Mouse-ear cress).